We begin with the raw amino-acid sequence, 386 residues long: Methylthioribose-1-phosphate isomerase (386 aa).

The active-site Proton donor is aspartate 258.

This sequence belongs to the eIF-2B alpha/beta/delta subunits family. MtnA subfamily.

It localises to the cytoplasm. The protein resides in the nucleus. The catalysed reaction is 5-(methylsulfanyl)-alpha-D-ribose 1-phosphate = 5-(methylsulfanyl)-D-ribulose 1-phosphate. It participates in amino-acid biosynthesis; L-methionine biosynthesis via salvage pathway; L-methionine from S-methyl-5-thio-alpha-D-ribose 1-phosphate: step 1/6. Catalyzes the interconversion of methylthioribose-1-phosphate (MTR-1-P) into methylthioribulose-1-phosphate (MTRu-1-P). The chain is Methylthioribose-1-phosphate isomerase from Uncinocarpus reesii (strain UAMH 1704).